The following is a 320-amino-acid chain: Solute carrier family 25 member 33 (320 aa).

Solcar repeat units follow at residues 9-118 (ENTL…AKEQ), 126-213 (NSNT…LKKC), and 231-315 (SGFF…IVYL). The next 6 helical transmembrane spans lie at 12–32 (LLHL…TCPL), 49–65 (VYYP…AGMV), 121–141 (GIFV…AAFV), 190–210 (LTAS…YESL), 233–253 (FFGL…IAYP), and 298–318 (QIPN…LLGE).

Belongs to the mitochondrial carrier (TC 2.A.29) family.

It localises to the mitochondrion inner membrane. It catalyses the reaction UTP(in) + UDP(out) = UTP(out) + UDP(in). The catalysed reaction is dUTP(out) + UTP(in) = dUTP(in) + UTP(out). The enzyme catalyses 5-methyl-UTP(out) + UTP(in) = 5-methyl-UTP(in) + UTP(out). It carries out the reaction 5-methyl-UDP(out) + UTP(in) = 5-methyl-UDP(in) + UTP(out). It catalyses the reaction UTP(in) + CTP(out) = UTP(out) + CTP(in). The catalysed reaction is CDP(out) + UTP(in) = CDP(in) + UTP(out). The enzyme catalyses dCTP(out) + UTP(in) = dCTP(in) + UTP(out). It carries out the reaction dCDP(out) + UTP(in) = dCDP(in) + UTP(out). It catalyses the reaction UTP(in) + GTP(out) = UTP(out) + GTP(in). The catalysed reaction is UTP(in) + GDP(out) = UTP(out) + GDP(in). The enzyme catalyses dGTP(out) + UTP(in) = dGTP(in) + UTP(out). It carries out the reaction dGDP(out) + UTP(in) = dGDP(in) + UTP(out). It catalyses the reaction ITP(out) + UTP(in) = ITP(in) + UTP(out). Mitochondrial transporter that imports/exports pyrimidine nucleotides into and from mitochondria. Selectively transports uridine, thymidine, guanosine, cytosine and inosine (deoxy)nucleoside di- and triphosphates by an antiport mechanism. May import (deoxy)nucleoside triphosphates in exchange for intramitochondrial (deoxy)nucleoside diphosphates, thus providing precursors necessary for de novo synthesis of mitochondrial DNA and RNA while exporting products of their catabolism. Participates in mitochondrial genome maintenance, regulation of mitochondrial membrane potential and mitochondrial respiration. Upon INS or IGF1 stimulation regulates cell growth and proliferation by controlling mitochondrial DNA replication and transcription, the ratio of mitochondria-to nuclear-encoded components of the electron transport chain resulting in control of mitochondrial ROS production. Participates in dendritic cell endocytosis and may associate with mitochondrial oxidative phosphorylation. The protein is Solute carrier family 25 member 33 (Slc25a33) of Mus musculus (Mouse).